A 290-amino-acid chain; its full sequence is D-tagatose 3-epimerase (290 aa).

A substrate-binding site is contributed by C66. E152 serves as the catalytic Proton donor/acceptor. Residue E152 participates in Mn(2+) binding. Residues E158 and 185–188 (DTFH) contribute to the substrate site. Residues D185 and H211 each contribute to the Mn(2+) site. Residue R217 participates in substrate binding. Residue E246 is the Proton donor/acceptor of the active site. E246 serves as a coordination point for Mn(2+).

It belongs to the hyi family. Homodimer. Mn(2+) is required as a cofactor.

It catalyses the reaction keto-D-tagatose = keto-D-sorbose. The enzyme catalyses D-allulose = keto-D-fructose. The catalysed reaction is D-ribulose = D-xylulose. Its activity is regulated as follows. Strongly inhibited (about 90% of the enzyme activity) by Ag(+), Hg(2+) and p-chloromercuribenzoic acid. Cu(2+) and Zn(2+) inhibit about 60% of the enzyme activity. Catalyzes the epimerization of various ketoses at the C(3) position. It is able to interconvert D-tagatose and D-ribulose to D-sorbose and D-xylulose, respectively. The enzyme is also able to accept other ketopentoses such as D-psicose with lower efficiency. In Pseudomonas cichorii, this protein is D-tagatose 3-epimerase.